We begin with the raw amino-acid sequence, 92 residues long: Small ribosomal subunit protein uS19c (92 aa).

The protein belongs to the universal ribosomal protein uS19 family.

The protein localises to the plastid. It localises to the chloroplast. Functionally, protein S19 forms a complex with S13 that binds strongly to the 16S ribosomal RNA. The protein is Small ribosomal subunit protein uS19c of Illicium oligandrum (Star anise).